The chain runs to 36 residues: Peroxiredoxin-4 (36 aa).

It belongs to the peroxiredoxin family. AhpC/Prx1 subfamily. As to quaternary structure, homodimer; disulfide-linked, upon oxidation. Venom gland.

Its subcellular location is the secreted. The catalysed reaction is a hydroperoxide + [thioredoxin]-dithiol = an alcohol + [thioredoxin]-disulfide + H2O. Its function is as follows. Venom peroxiredoxin enzyme that may play a role as part of a redox pathway leading to the structural/functional diversification of toxins through a disulfide bond engineering mechanism. In Crotalus atrox (Western diamondback rattlesnake), this protein is Peroxiredoxin-4.